The primary structure comprises 208 residues: Putative RING finger protein 413R (208 aa).

Residues 1-87 (MDAIFYPLPI…RHWSDDDSDR (87 aa)) form a disordered region. The span at 22-71 (DFQEEDFQEEDFQEEDFQEEDFQEEDEDEEDEEVNEYPSDLDDEYPDSDY) shows a compositional bias: acidic residues. Residues 72 to 82 (YDERSDRHWSD) show a composition bias toward basic and acidic residues. The stretch at 83–147 (DDSDRDLDDL…KLTTLSKNLT (65 aa)) forms a coiled coil. The RING-type zinc-finger motif lies at 148-196 (CIICLTNQVQILTIPCGHLIMCNPCSLNLNNSVCTRGVNSNYEKCPKCR).

The polypeptide is Putative RING finger protein 413R (EF2) (Acheta domesticus (House cricket)).